Here is a 138-residue protein sequence, read N- to C-terminus: Thioredoxin H2-1 (138 aa).

The disordered stretch occupies residues 1–20 (MGGAFSTSKPKPAAGEEGGE). The Thioredoxin domain maps to 12-129 (PAAGEEGGES…LEKTINTLRS (118 aa)). Active-site nucleophile residues include C55 and C58. C55 and C58 are disulfide-bonded.

The protein belongs to the thioredoxin family. Plant H-type subfamily.

It localises to the cytoplasm. In terms of biological role, probable thiol-disulfide oxidoreductase that may be involved in the redox regulation of a number of cytosolic enzymes. In Oryza sativa subsp. japonica (Rice), this protein is Thioredoxin H2-1.